Here is a 354-residue protein sequence, read N- to C-terminus: NADH-quinone oxidoreductase subunit H (354 aa).

A run of 8 helical transmembrane segments spans residues 25–45 (LVRI…LILW), 91–111 (WLYL…WAVI), 126–146 (LLYA…AGWA), 170–190 (MGFA…SEIV), 205–225 (FLSW…ISGI), 253–273 (MAFA…SALA), 290–310 (FIPG…VFIW), and 330–350 (VFLP…MSPL).

It belongs to the complex I subunit 1 family. NDH-1 is composed of 14 different subunits. Subunits NuoA, H, J, K, L, M, N constitute the membrane sector of the complex.

The protein resides in the cell inner membrane. It catalyses the reaction a quinone + NADH + 5 H(+)(in) = a quinol + NAD(+) + 4 H(+)(out). NDH-1 shuttles electrons from NADH, via FMN and iron-sulfur (Fe-S) centers, to quinones in the respiratory chain. The immediate electron acceptor for the enzyme in this species is believed to be ubiquinone. Couples the redox reaction to proton translocation (for every two electrons transferred, four hydrogen ions are translocated across the cytoplasmic membrane), and thus conserves the redox energy in a proton gradient. This subunit may bind ubiquinone. The chain is NADH-quinone oxidoreductase subunit H from Burkholderia thailandensis (strain ATCC 700388 / DSM 13276 / CCUG 48851 / CIP 106301 / E264).